The chain runs to 54 residues: Pars intercerebralis major peptide D1 (54 aa).

Belongs to the granulin family. Post-translationally, six disulfide bonds are present. As to expression, brain.

It is found in the secreted. The protein is Pars intercerebralis major peptide D1 of Locusta migratoria (Migratory locust).